Here is an 80-residue protein sequence, read N- to C-terminus: Small ribosomal subunit protein uS17c (80 aa).

Belongs to the universal ribosomal protein uS17 family. As to quaternary structure, part of the 30S ribosomal subunit.

The protein resides in the plastid. The protein localises to the chloroplast. In terms of biological role, one of the primary rRNA binding proteins, it binds specifically to the 5'-end of 16S ribosomal RNA. This Gracilaria tenuistipitata var. liui (Red alga) protein is Small ribosomal subunit protein uS17c (rps17).